A 484-amino-acid chain; its full sequence is Glutamate--tRNA ligase (484 aa).

The 'HIGH' region motif lies at 10 to 20 (PSPTGYLHVGG). The 'KMSKS' region motif lies at 252-256 (KLSKR). Lys255 contacts ATP.

The protein belongs to the class-I aminoacyl-tRNA synthetase family. Glutamate--tRNA ligase type 1 subfamily. Monomer.

It localises to the cytoplasm. The catalysed reaction is tRNA(Glu) + L-glutamate + ATP = L-glutamyl-tRNA(Glu) + AMP + diphosphate. Functionally, catalyzes the attachment of glutamate to tRNA(Glu) in a two-step reaction: glutamate is first activated by ATP to form Glu-AMP and then transferred to the acceptor end of tRNA(Glu). In Mycoplasma genitalium (strain ATCC 33530 / DSM 19775 / NCTC 10195 / G37) (Mycoplasmoides genitalium), this protein is Glutamate--tRNA ligase.